Reading from the N-terminus, the 84-residue chain is MKRIISKKSNRIFKPKPCFFHVEKIKYIDYKDVELVSKYINNHGKILSSKITGNCAKHQRLISNVIKRARIMALIPFISERIRK.

It belongs to the bacterial ribosomal protein bS18 family. As to quaternary structure, part of the 30S ribosomal subunit. Forms a tight heterodimer with protein bS6.

Functionally, binds as a heterodimer with protein bS6 to the central domain of the 16S rRNA, where it helps stabilize the platform of the 30S subunit. This is Small ribosomal subunit protein bS18 from Mycoplasma mobile (strain ATCC 43663 / 163K / NCTC 11711) (Mesomycoplasma mobile).